A 546-amino-acid chain; its full sequence is Glucose-6-phosphate isomerase (546 aa).

Catalysis depends on E358, which acts as the Proton donor. Residues H389 and K504 contribute to the active site.

Belongs to the GPI family.

The protein localises to the cytoplasm. It carries out the reaction alpha-D-glucose 6-phosphate = beta-D-fructose 6-phosphate. It functions in the pathway carbohydrate biosynthesis; gluconeogenesis. The protein operates within carbohydrate degradation; glycolysis; D-glyceraldehyde 3-phosphate and glycerone phosphate from D-glucose: step 2/4. Catalyzes the reversible isomerization of glucose-6-phosphate to fructose-6-phosphate. This Desulfosudis oleivorans (strain DSM 6200 / JCM 39069 / Hxd3) (Desulfococcus oleovorans) protein is Glucose-6-phosphate isomerase.